The chain runs to 1144 residues: Nitric oxide synthase, inducible (1144 aa).

Positions 23 to 27 (DINNN) match the DINNN-motif; mediates interaction with SPSB1, SPSB2 and SPSB4 motif. The interval 37–59 (SPTIQDDPKSHQNGSPQLLTGTA) is disordered. Residues 47–59 (HQNGSPQLLTGTA) show a composition bias toward polar residues. Zn(2+) is bound by residues C104 and C109. S112 serves as a coordination point for (6R)-L-erythro-5,6,7,8-tetrahydrobiopterin. A heme b-binding site is contributed by C194. Residues Q257, W366, Y367, and E371 each contribute to the L-arginine site. The (6R)-L-erythro-5,6,7,8-tetrahydrobiopterin site is built by R375, I456, W457, and F470. Y485 lines the heme b pocket. Residues 509–529 (FRVLVKVVFFASMLMRKVMAS) form a calmodulin-binding region. Residues 533–671 (ATVLFATETG…AFRSWAVQTF (139 aa)) form the Flavodoxin-like domain. 5 residues coordinate FMN: T539, E540, T541, K543, and S544. A Phosphotyrosine modification is found at Y569. FMN contacts are provided by S585, T586, S622, C629, E655, and Q659. The 241-residue stretch at 724–964 (KNVFTMRLKS…VRSVSGFQLP (241 aa)) folds into the FAD-binding FR-type domain. Residue R744 coordinates NADP(+). 6 residues coordinate FAD: H766, R900, Y902, S903, T918, and A920. T923 contributes to the NADP(+) binding site. FAD contacts are provided by Y924, V937, C938, and S939. The NADP(+) site is built by T978, R1011, S1040, R1041, K1047, Y1049, Q1051, and D1084.

It belongs to the NOS family. As to quaternary structure, homodimer. Interacts with NHERF1. Interacts with GAPDH. Interacts with S100A8 and S100A9 to form the iNOS-S100A8/9 transnitrosylase complex. Interacts with SPSB1, SPSB2 and SPSB4. Interacts with ELOC and CUL5 in the presence of SPSB1 or SPSB2 or SPSB4. Forms a complex with ASL, ASS1 and HSP90AA1; the complex regulates cell-autonomous L-arginine synthesis and citrulline recycling while channeling extracellular L-arginine to nitric oxide synthesis pathway. The cofactor is heme b. Requires FAD as cofactor. FMN is required as a cofactor. (6R)-L-erythro-5,6,7,8-tetrahydrobiopterin serves as cofactor. Post-translationally, polyubiquitinated; mediated by SPSB1, SPSB2 and SPSB4, leading to proteasomal degradation. As to expression, macrophages.

It localises to the cytoplasm. Its subcellular location is the cytosol. It catalyses the reaction 2 L-arginine + 3 NADPH + 4 O2 + H(+) = 2 L-citrulline + 2 nitric oxide + 3 NADP(+) + 4 H2O. Its activity is regulated as follows. Not stimulated by calcium/calmodulin. Aspirin inhibits expression and function of this enzyme and effects may be exerted at the level of translational/post-translational modification and directly on the catalytic activity. In terms of biological role, produces nitric oxide (NO) which is a messenger molecule with diverse functions throughout the body. In macrophages, NO mediates tumoricidal and bactericidal actions. Also has nitrosylase activity and mediates cysteine S-nitrosylation of cytoplasmic target proteins such PTGS2/COX2. As component of the iNOS-S100A8/9 transnitrosylase complex involved in the selective inflammatory stimulus-dependent S-nitrosylation of GAPDH implicated in regulation of the GAIT complex activity and probably multiple targets including ANXA5, EZR, MSN and VIM. Involved in inflammation, enhances the synthesis of pro-inflammatory mediators such as IL6 and IL8. This is Nitric oxide synthase, inducible (Nos2) from Mus musculus (Mouse).